Here is a 342-residue protein sequence, read N- to C-terminus: Holliday junction branch migration complex subunit RuvB (342 aa).

The large ATPase domain (RuvB-L) stretch occupies residues 1-181 (MENRMVTPFD…FGMLCAMEFY (181 aa)). ATP contacts are provided by residues leucine 20, arginine 21, glycine 62, lysine 65, threonine 66, threonine 67, 128 to 130 (EDY), arginine 171, tyrosine 181, and arginine 218. Residue threonine 66 coordinates Mg(2+). Residues 182 to 252 (TDEELMEIVV…GAKAALDLLE (71 aa)) form a small ATPAse domain (RuvB-S) region. Positions 255 to 342 (KEGLDKIDNK…KDNQVSIFNK (88 aa)) are head domain (RuvB-H). Residues arginine 310 and arginine 315 each contribute to the DNA site.

This sequence belongs to the RuvB family. Homohexamer. Forms an RuvA(8)-RuvB(12)-Holliday junction (HJ) complex. HJ DNA is sandwiched between 2 RuvA tetramers; dsDNA enters through RuvA and exits via RuvB. An RuvB hexamer assembles on each DNA strand where it exits the tetramer. Each RuvB hexamer is contacted by two RuvA subunits (via domain III) on 2 adjacent RuvB subunits; this complex drives branch migration. In the full resolvosome a probable DNA-RuvA(4)-RuvB(12)-RuvC(2) complex forms which resolves the HJ.

The protein localises to the cytoplasm. The catalysed reaction is ATP + H2O = ADP + phosphate + H(+). Functionally, the RuvA-RuvB-RuvC complex processes Holliday junction (HJ) DNA during genetic recombination and DNA repair, while the RuvA-RuvB complex plays an important role in the rescue of blocked DNA replication forks via replication fork reversal (RFR). RuvA specifically binds to HJ cruciform DNA, conferring on it an open structure. The RuvB hexamer acts as an ATP-dependent pump, pulling dsDNA into and through the RuvAB complex. RuvB forms 2 homohexamers on either side of HJ DNA bound by 1 or 2 RuvA tetramers; 4 subunits per hexamer contact DNA at a time. Coordinated motions by a converter formed by DNA-disengaged RuvB subunits stimulates ATP hydrolysis and nucleotide exchange. Immobilization of the converter enables RuvB to convert the ATP-contained energy into a lever motion, pulling 2 nucleotides of DNA out of the RuvA tetramer per ATP hydrolyzed, thus driving DNA branch migration. The RuvB motors rotate together with the DNA substrate, which together with the progressing nucleotide cycle form the mechanistic basis for DNA recombination by continuous HJ branch migration. Branch migration allows RuvC to scan DNA until it finds its consensus sequence, where it cleaves and resolves cruciform DNA. The protein is Holliday junction branch migration complex subunit RuvB of Clostridium botulinum (strain ATCC 19397 / Type A).